The sequence spans 356 residues: Histidinol-phosphate aminotransferase (356 aa).

N6-(pyridoxal phosphate)lysine is present on lysine 214.

This sequence belongs to the class-II pyridoxal-phosphate-dependent aminotransferase family. Histidinol-phosphate aminotransferase subfamily. Homodimer. Pyridoxal 5'-phosphate serves as cofactor.

It catalyses the reaction L-histidinol phosphate + 2-oxoglutarate = 3-(imidazol-4-yl)-2-oxopropyl phosphate + L-glutamate. The protein operates within amino-acid biosynthesis; L-histidine biosynthesis; L-histidine from 5-phospho-alpha-D-ribose 1-diphosphate: step 7/9. The polypeptide is Histidinol-phosphate aminotransferase (Escherichia coli O1:K1 / APEC).